A 309-amino-acid chain; its full sequence is p-hydroxybenzoic acid efflux pump subunit AaeA (309 aa).

The helical transmembrane segment at 12 to 32 threads the bilayer; the sequence is AITVVLVILAFIAIFNAWVYY.

It belongs to the membrane fusion protein (MFP) (TC 8.A.1) family.

Its subcellular location is the cell inner membrane. Forms an efflux pump with AaeB. The polypeptide is p-hydroxybenzoic acid efflux pump subunit AaeA (Escherichia coli O157:H7).